Consider the following 531-residue polypeptide: uncharacterized protein (531 aa).

A signal peptide spans 1–28; the sequence is MNTKGIIAKLTAGALIANLLICPANTLA. SLH domains lie at 29–85, 86–149, and 150–210; these read EKKT…QINK, QAKP…IGDL, and PTQF…SKRM. One can recognise a MurNAc-LAA domain in the interval 335 to 517; that stretch reads IIIDPGHGGI…AAEAIYAGIL (183 aa).

It in the C-terminal section; belongs to the N-acetylmuramoyl-L-alanine amidase 3 family.

It localises to the secreted. It is found in the cell wall. Its subcellular location is the S-layer. This is an uncharacterized protein from Bacillus anthracis.